The chain runs to 59 residues: MCVLMEDSSMSNGIDVDKGFAIAFVVLVFVFLIVMVFRCVKLVKNPYEVSSTTADLPLN.

The helical transmembrane segment at 20-40 threads the bilayer; the sequence is FAIAFVVLVFVFLIVMVFRCV.

Its subcellular location is the membrane. The protein is Cortexin domain containing 2 of Mus musculus (Mouse).